The sequence spans 363 residues: tRNA N6-adenosine threonylcarbamoyltransferase (363 aa).

The Fe cation site is built by His-138, His-142, and Tyr-159. Substrate is bound by residues 159 to 163 (YVSGG), Asp-191, Asp-212, and Ser-295. Asp-323 serves as a coordination point for Fe cation.

The protein belongs to the KAE1 / TsaD family. The cofactor is Fe(2+).

It is found in the cytoplasm. It catalyses the reaction L-threonylcarbamoyladenylate + adenosine(37) in tRNA = N(6)-L-threonylcarbamoyladenosine(37) in tRNA + AMP + H(+). In terms of biological role, required for the formation of a threonylcarbamoyl group on adenosine at position 37 (t(6)A37) in tRNAs that read codons beginning with adenine. Is probably involved in the transfer of the threonylcarbamoyl moiety of threonylcarbamoyl-AMP (TC-AMP) to the N6 group of A37. The protein is tRNA N6-adenosine threonylcarbamoyltransferase of Hyperthermus butylicus (strain DSM 5456 / JCM 9403 / PLM1-5).